A 380-amino-acid polypeptide reads, in one-letter code: uncharacterized protein (380 aa).

A disordered region spans residues 251–275; the sequence is NMSERPPTPSHDTASSSTSTDPNPL. The segment covering 260 to 272 has biased composition (low complexity); sequence SHDTASSSTSTDP.

This is an uncharacterized protein from Allium cepa var. aggregatum (Shallot).